The sequence spans 359 residues: Peptide chain release factor 1 (359 aa).

The residue at position 235 (glutamine 235) is an N5-methylglutamine. The segment at 287 to 312 (AQEASAMRSAQVGSGDRSERIRTYNF) is disordered.

This sequence belongs to the prokaryotic/mitochondrial release factor family. In terms of processing, methylated by PrmC. Methylation increases the termination efficiency of RF1.

It is found in the cytoplasm. Functionally, peptide chain release factor 1 directs the termination of translation in response to the peptide chain termination codons UAG and UAA. This Chlamydia trachomatis serovar L2 (strain ATCC VR-902B / DSM 19102 / 434/Bu) protein is Peptide chain release factor 1.